A 495-amino-acid chain; its full sequence is Glycerol kinase (495 aa).

Thr12 contributes to the ADP binding site. ATP contacts are provided by Thr12, Thr13, and Ser14. Residue Thr12 participates in sn-glycerol 3-phosphate binding. Arg16 is an ADP binding site. Positions 82, 83, 134, and 243 each coordinate sn-glycerol 3-phosphate. Positions 82, 83, 134, 243, and 244 each coordinate glycerol. Positions 265 and 308 each coordinate ADP. 4 residues coordinate ATP: Thr265, Gly308, Gln312, and Gly409. ADP-binding residues include Gly409 and Asn413.

This sequence belongs to the FGGY kinase family.

The catalysed reaction is glycerol + ATP = sn-glycerol 3-phosphate + ADP + H(+). The protein operates within polyol metabolism; glycerol degradation via glycerol kinase pathway; sn-glycerol 3-phosphate from glycerol: step 1/1. With respect to regulation, inhibited by fructose 1,6-bisphosphate (FBP). Key enzyme in the regulation of glycerol uptake and metabolism. Catalyzes the phosphorylation of glycerol to yield sn-glycerol 3-phosphate. The protein is Glycerol kinase of Ectopseudomonas mendocina (strain ymp) (Pseudomonas mendocina).